The following is a 322-amino-acid chain: tRNA N6-adenosine threonylcarbamoyltransferase (322 aa).

Fe cation contacts are provided by His109 and His113. Residues 131–135 (LISGG), Asp164, Gly177, Asp181, and Asn277 contribute to the substrate site. Asp303 serves as a coordination point for Fe cation.

The protein belongs to the KAE1 / TsaD family. Requires Fe(2+) as cofactor.

It localises to the cytoplasm. The enzyme catalyses L-threonylcarbamoyladenylate + adenosine(37) in tRNA = N(6)-L-threonylcarbamoyladenosine(37) in tRNA + AMP + H(+). Functionally, required for the formation of a threonylcarbamoyl group on adenosine at position 37 (t(6)A37) in tRNAs that read codons beginning with adenine. Is involved in the transfer of the threonylcarbamoyl moiety of threonylcarbamoyl-AMP (TC-AMP) to the N6 group of A37, together with TsaE and TsaB. TsaD likely plays a direct catalytic role in this reaction. This chain is tRNA N6-adenosine threonylcarbamoyltransferase, found in Mesomycoplasma hyopneumoniae (strain 232) (Mycoplasma hyopneumoniae).